The sequence spans 340 residues: UDP-N-acetylglucosamine--N-acetylmuramyl-(pentapeptide) pyrophosphoryl-undecaprenol N-acetylglucosamine transferase (340 aa).

Residues 10-12, asparagine 110, serine 171, and glutamine 272 each bind UDP-N-acetyl-alpha-D-glucosamine; that span reads TGG.

This sequence belongs to the glycosyltransferase 28 family. MurG subfamily.

The protein localises to the cell membrane. The catalysed reaction is di-trans,octa-cis-undecaprenyl diphospho-N-acetyl-alpha-D-muramoyl-L-alanyl-D-glutamyl-meso-2,6-diaminopimeloyl-D-alanyl-D-alanine + UDP-N-acetyl-alpha-D-glucosamine = di-trans,octa-cis-undecaprenyl diphospho-[N-acetyl-alpha-D-glucosaminyl-(1-&gt;4)]-N-acetyl-alpha-D-muramoyl-L-alanyl-D-glutamyl-meso-2,6-diaminopimeloyl-D-alanyl-D-alanine + UDP + H(+). It functions in the pathway cell wall biogenesis; peptidoglycan biosynthesis. Functionally, cell wall formation. Catalyzes the transfer of a GlcNAc subunit on undecaprenyl-pyrophosphoryl-MurNAc-pentapeptide (lipid intermediate I) to form undecaprenyl-pyrophosphoryl-MurNAc-(pentapeptide)GlcNAc (lipid intermediate II). This chain is UDP-N-acetylglucosamine--N-acetylmuramyl-(pentapeptide) pyrophosphoryl-undecaprenol N-acetylglucosamine transferase, found in Wolbachia pipientis subsp. Culex pipiens (strain wPip).